The primary structure comprises 214 residues: NAD(P)H-quinone oxidoreductase subunit 5, chloroplastic (214 aa).

The next 2 helical transmembrane spans lie at L84 to F104 and S152 to F172.

This sequence belongs to the complex I subunit 5 family. In terms of assembly, NDH is composed of at least 16 different subunits, 5 of which are encoded in the nucleus.

The protein localises to the plastid. It is found in the chloroplast thylakoid membrane. The enzyme catalyses a plastoquinone + NADH + (n+1) H(+)(in) = a plastoquinol + NAD(+) + n H(+)(out). It carries out the reaction a plastoquinone + NADPH + (n+1) H(+)(in) = a plastoquinol + NADP(+) + n H(+)(out). In terms of biological role, NDH shuttles electrons from NAD(P)H:plastoquinone, via FMN and iron-sulfur (Fe-S) centers, to quinones in the photosynthetic chain and possibly in a chloroplast respiratory chain. The immediate electron acceptor for the enzyme in this species is believed to be plastoquinone. Couples the redox reaction to proton translocation, and thus conserves the redox energy in a proton gradient. The protein is NAD(P)H-quinone oxidoreductase subunit 5, chloroplastic (ndhF) of Brachypodium sylvaticum (False brome).